Consider the following 92-residue polypeptide: Small ribosomal subunit protein uS19 (92 aa).

This sequence belongs to the universal ribosomal protein uS19 family.

Protein S19 forms a complex with S13 that binds strongly to the 16S ribosomal RNA. This Wigglesworthia glossinidia brevipalpis protein is Small ribosomal subunit protein uS19.